The chain runs to 1238 residues: Cullin-associated NEDD8-dissociated protein 1 (1238 aa).

HEAT repeat units lie at residues 41–78 (TYENKIVTKLLALTADSANNVQENVVKCLGLLIKRVKD), 126–167 (LVIK…KYGS), 171–208 (GDLENIQKVVLPKLNATRPAIRKRAILCLANIAFPSPD), 210–247 (LFNSLLDYIIKSIEEAKKPDHISTLIQAIGAICKSSGY), and 251–292 (KYLP…KCQK). The disordered stretch occupies residues 315–354 (YSDDGEGEEDGDEEEEEMETSGDNDEEQEEEEEEEDLSDD). HEAT repeat units lie at residues 382-419 (ELYQKVAPVLYNRFKEREENVRLDIFTTFVLLLKQLNK), 432-469 (QQVPKLVQSISKSLIDKSIRTRVGAIALLKELVMIIPG), 603-641 (EIQSELQPCLSILLERLDNELTRVVTVKVLSRIINSSIN), 646-683 (SILPSAIKLLSTFLRKNNRVLKQSSLIALNDIVKVCPN), 688-725 (SLLTGILTEMATLINESDLQITHLAFVFIQNLLKNYSE), 853-890 (HENENLQESVYKTFEANNEEIKQVAALCLGDIAVCSLQ), 933-966 (PFLQSILPLLFDNCVNEEEGTRNIVAECLGKLSM), 967-1004 (IEPNEIIPKLVEKIKSPSPLERSTIVTSIKFSIMENKE), and 1008-1045 (QYLAPNISQFLSLLHDGDLIVRRSALLSLNYIAHNKPN).

This sequence belongs to the CAND family.

The protein resides in the nucleus. Functionally, key assembly factor of SCF (SKP1-CUL1-F-box protein) E3 ubiquitin ligase complexes that promotes the exchange of the substrate-recognition F-box subunit in SCF complexes, thereby playing a key role in the cellular repertoire of SCF complexes. Acts as a F-box protein exchange factor. In Dictyostelium discoideum (Social amoeba), this protein is Cullin-associated NEDD8-dissociated protein 1 (cand1).